The chain runs to 265 residues: Imidazole glycerol phosphate synthase subunit HisF (265 aa).

Active-site residues include Asp12 and Asp131.

It belongs to the HisA/HisF family. As to quaternary structure, heterodimer of HisH and HisF.

The protein localises to the cytoplasm. The catalysed reaction is 5-[(5-phospho-1-deoxy-D-ribulos-1-ylimino)methylamino]-1-(5-phospho-beta-D-ribosyl)imidazole-4-carboxamide + L-glutamine = D-erythro-1-(imidazol-4-yl)glycerol 3-phosphate + 5-amino-1-(5-phospho-beta-D-ribosyl)imidazole-4-carboxamide + L-glutamate + H(+). The protein operates within amino-acid biosynthesis; L-histidine biosynthesis; L-histidine from 5-phospho-alpha-D-ribose 1-diphosphate: step 5/9. In terms of biological role, IGPS catalyzes the conversion of PRFAR and glutamine to IGP, AICAR and glutamate. The HisF subunit catalyzes the cyclization activity that produces IGP and AICAR from PRFAR using the ammonia provided by the HisH subunit. The polypeptide is Imidazole glycerol phosphate synthase subunit HisF (Alkalilimnicola ehrlichii (strain ATCC BAA-1101 / DSM 17681 / MLHE-1)).